Here is a 131-residue protein sequence, read N- to C-terminus: Small ribosomal subunit protein uS8 (131 aa).

It belongs to the universal ribosomal protein uS8 family. Part of the 30S ribosomal subunit. Contacts proteins S5 and S12.

In terms of biological role, one of the primary rRNA binding proteins, it binds directly to 16S rRNA central domain where it helps coordinate assembly of the platform of the 30S subunit. This is Small ribosomal subunit protein uS8 from Mesomycoplasma hyopneumoniae (strain 7448) (Mycoplasma hyopneumoniae).